A 681-amino-acid polypeptide reads, in one-letter code: Peroxisomal acyl-coenzyme A oxidase 2 (681 aa).

Residue S9 is modified to Phosphoserine. An N6-succinyllysine mark is found at K66, K137, K453, K561, and K667. A Microbody targeting signal motif is present at residues 679–681 (SNL).

Belongs to the acyl-CoA oxidase family. In terms of assembly, homodimer. Requires FAD as cofactor. In terms of tissue distribution, liver and kidney.

The protein localises to the peroxisome. The enzyme catalyses (25R)-3alpha,7alpha,12alpha-trihydroxy-5beta-cholestan-26-oyl-CoA + A + H2O = (24R,25R)-3alpha,7alpha,12alpha,24-tetrahydroxy-5beta-cholestan-26-oyl-CoA + AH2. The catalysed reaction is (25S)-3alpha,7alpha,12alpha-trihydroxy-5beta-cholestan-26-oyl-CoA + O2 = (24E)-3alpha,7alpha,12alpha-trihydroxy-5beta-cholest-24-en-26-oyl-CoA + H2O2. Oxidizes the CoA esters of the bile acid intermediates di- and tri-hydroxycholestanoic acids. Capable of oxidizing short as well as long chain 2-methyl branched fatty acids. In Oryctolagus cuniculus (Rabbit), this protein is Peroxisomal acyl-coenzyme A oxidase 2.